The chain runs to 145 residues: Peptide methionine sulfoxide reductase MsrB (145 aa).

Positions 6–129 constitute a MsrB domain; that stretch reads KNERLQQLTD…NSAALRFIPV (124 aa). The active-site Nucleophile is Cys118.

The protein belongs to the MsrB Met sulfoxide reductase family.

It carries out the reaction L-methionyl-[protein] + [thioredoxin]-disulfide + H2O = L-methionyl-(R)-S-oxide-[protein] + [thioredoxin]-dithiol. This chain is Peptide methionine sulfoxide reductase MsrB, found in Listeria monocytogenes serotype 4b (strain CLIP80459).